The sequence spans 128 residues: L-ectoine synthase (128 aa).

Belongs to the ectoine synthase family.

The enzyme catalyses (2S)-4-acetamido-2-aminobutanoate = L-ectoine + H2O. It functions in the pathway amine and polyamine biosynthesis; ectoine biosynthesis; L-ectoine from L-aspartate 4-semialdehyde: step 3/3. Its function is as follows. Catalyzes the circularization of gamma-N-acetyl-alpha,gamma-diaminobutyric acid (ADABA) to ectoine (1,4,5,6-tetrahydro-2-methyl-4-pyrimidine carboxylic acid), which is an excellent osmoprotectant. The sequence is that of L-ectoine synthase from Virgibacillus pantothenticus.